A 4036-amino-acid chain; its full sequence is Hybrid PKS-NRPS synthetase iliA (4036 aa).

Positions 7 to 439 constitute a Ketosynthase family 3 (KS3) domain; sequence PEPIAVIGSA…GTNAHAIIES (433 aa). Active-site for beta-ketoacyl synthase activity residues include Cys181, His318, and His359. Residues 561 to 886 are malonyl-CoA:ACP transacylase (MAT) domain; it reads IFTGQGAQWP…LKRNGSDVEA (326 aa). The interval 955–1092 is N-terminal hotdog fold; it reads HELLGRRTPD…GDLVVHLGAD (138 aa). The segment at 955–1262 is dehydratase (DH) domain; it reads HELLGRRTPD…ATNMVGEQDA (308 aa). Residues 955 to 1263 enclose the PKS/mFAS DH domain; that stretch reads HELLGRRTPD…TNMVGEQDAS (309 aa). The active-site Proton acceptor; for dehydratase activity is His987. Residues 1109–1263 form a C-terminal hotdog fold region; it reads LVNIDGERVY…TNMVGEQDAS (155 aa). The Proton donor; for dehydratase activity role is filled by Asp1168. The tract at residues 1402–1601 is methyltransferase (MT) domain; sequence EDDMLDRFYM…FSGADTVMHD (200 aa). Residues 2136 to 2277 form a ketoreductase (KR) domain region; that stretch reads KTYFMVGMAG…SVATVIGNIG (142 aa). A Carrier 1 domain is found at 2425 to 2502; it reads EAVAAVVKAF…QVCTWATKKV (78 aa). Ser2462 carries the post-translational modification O-(pantetheine 4'-phosphoryl)serine. Disordered regions lie at residues 2520–2583 and 2597–2621; these read AEKT…KLGT and DADA…NRPE. The span at 2530 to 2540 shows a compositional bias: pro residues; sequence APAPDAAPAPA. The tract at residues 2627 to 3054 is condensation (C) domain; sequence IMSQAQSRIW…HLDITECEIY (428 aa). Positions 3088 to 3485 are adenylation (A) (KR) domain; it reads SLHSDKSAVK…GTLLCLGRLD (398 aa). A reductase (RED) domain region spans residues 3088–3485; the sequence is SLHSDKSAVK…GTLLCLGRLD (398 aa). Positions 3596 to 3675 constitute a Carrier 2 domain; it reads EKMTIREGEV…EMARRIDEHQ (80 aa). Residue Ser3635 is modified to O-(pantetheine 4'-phosphoryl)serine.

In the C-terminal section; belongs to the NRP synthetase family.

It carries out the reaction L-tyrosine + holo-[ACP] + 7 malonyl-CoA + acetyl-CoA + 8 AH2 + 2 S-adenosyl-L-methionine + ATP + 4 H(+) = N-[(4E,6E,10S,12Z,14E)-6,10-dimethyl-3-oxohexadeca-4,6,12,14-tetraenoyl]-L-tyrosyl-[ACP] + 8 A + AMP + 2 S-adenosyl-L-homocysteine + 7 CO2 + diphosphate + 8 CoA + 6 H2O. It participates in mycotoxin biosynthesis. Its function is as follows. Hybrid PKS-NRPS synthetase; part of the gene cluster that mediates the biosynthesis of ilicicolin H, a 4-hydroxy-2-pyridonealkaloid that has potent and broad antifungal activities by inhibiting the mitochondrial respiration chain. IliA assembles the backbone of ilicicolin H. The PKS portion and trans-acting enoyl reductase iliB work together to construct an octaketide, and two methyl groups are introduced by the MT domain during the chain assembly. The nascent chain is then condensed with tyrosine, catalyzed by the C domain, and the resulting PKS-NRPS hybrid is offloaded by the RED domain to form an advanced tetramic acid intermediate. The biosynthesis of ilicicolin H starts with formation of the tetramic acid by the hybrid PKS-NRPS synthetase iliA with the partnering trans-enoyl reductase iliB since iliA lacks a designated enoylreductase (ER) domain. The cytochrome P450 monooxygenase iliC then catalyzes the ring expansion of the tetramate to the acyclic 2-pyridone. The pericyclase iliD further converts the acyclic 2-pyridone into 8-epi-ilicicolin H. 8-epi-ilicicolin H might then spontaneously convert to ilicicolin H, since ilicicolin H is produced in the absence of the epimerase iliE, in contrast to what was observed for the Talaromyces variabilis ilicolin H biosynthetic pathway. The protein is Hybrid PKS-NRPS synthetase iliA of Neonectria sp. (strain DH2).